A 1598-amino-acid polypeptide reads, in one-letter code: Transposon Ty2-LR2 Gag-Pol polyprotein (1598 aa).

3 stretches are compositionally biased toward polar residues: residues 1 to 11 (MESQQLHQNPH), 19 to 39 (ASVT…SASN), and 49 to 60 (KVNSQEETTPGT). Disordered stretches follow at residues 1–88 (MESQ…YQQH) and 359–449 (QHSE…SNDE). Residues 295–397 (ENNINVSDRL…SSKPRAAKAH (103 aa)) form an RNA-binding region. Positions 369–381 (TSPNTTNTKVTTR) are enriched in low complexity. 2 stretches are compositionally biased toward polar residues: residues 399-408 (IATSSKFSRV) and 415-435 (ESTV…GQQQ). Aspartate 457 functions as the For protease activity; shared with dimeric partner in the catalytic mechanism. Residues 579–636 (NVNKSKSVNKYPYPLIHRMLGHANFRSIQKSLKKNAVTYLKESDIEWSNASTYQCPDC) form an integrase-type zinc finger-like region. The Integrase catalytic domain maps to 656–831 (ESYEPFQYLH…AGLDITTILP (176 aa)). Residues aspartate 667 and aspartate 732 each contribute to the Mg(2+) site. Composition is skewed to polar residues over residues 915–927 (SFIE…QSYD), 1009–1034 (ESDT…STNE), and 1065–1082 (QRNS…STPS). Disordered regions lie at residues 915-934 (SFIE…ESDH), 1004-1034 (MGGT…STNE), 1059-1135 (TEEP…KSSK), 1146-1165 (LPLP…VSKD), and 1170-1205 (HSRQ…TEIE). Basic and acidic residues predominate over residues 1151 to 1165 (LTHKSPTDTSDVSKD). Residues 1193-1227 (KKRSLEDNETEIEVSRDTWNNKNMRSLEPPRSKKR) carry the Bipartite nuclear localization signal motif. Residues 1353–1491 (NDYYITQLDI…DILGLEIKYQ (139 aa)) enclose the Reverse transcriptase Ty1/copia-type domain. Residues aspartate 1361, aspartate 1442, and aspartate 1443 each contribute to the Mg(2+) site.

As to quaternary structure, the capsid protein forms a homotrimer, from which the VLPs are assembled. The protease is a homodimer, whose active site consists of two apposed aspartic acid residues. Initially, virus-like particles (VLPs) are composed of the structural unprocessed proteins Gag and Gag-Pol, and also contain the host initiator methionine tRNA (tRNA(i)-Met) which serves as a primer for minus-strand DNA synthesis, and a dimer of genomic Ty RNA. Processing of the polyproteins occurs within the particle and proceeds by an ordered pathway, called maturation. First, the protease (PR) is released by autocatalytic cleavage of the Gag-Pol polyprotein, and this cleavage is a prerequisite for subsequent processing at the remaining sites to release the mature structural and catalytic proteins. Maturation takes place prior to the RT reaction and is required to produce transposition-competent VLPs.

It is found in the cytoplasm. The protein resides in the nucleus. It catalyses the reaction DNA(n) + a 2'-deoxyribonucleoside 5'-triphosphate = DNA(n+1) + diphosphate. The catalysed reaction is Endonucleolytic cleavage to 5'-phosphomonoester.. In terms of biological role, capsid protein (CA) is the structural component of the virus-like particle (VLP), forming the shell that encapsulates the retrotransposons dimeric RNA genome. The particles are assembled from trimer-clustered units and there are holes in the capsid shells that allow for the diffusion of macromolecules. CA also has nucleocapsid-like chaperone activity, promoting primer tRNA(i)-Met annealing to the multipartite primer-binding site (PBS), dimerization of Ty2 RNA and initiation of reverse transcription. Its function is as follows. The aspartyl protease (PR) mediates the proteolytic cleavages of the Gag and Gag-Pol polyproteins after assembly of the VLP. Functionally, reverse transcriptase/ribonuclease H (RT) is a multifunctional enzyme that catalyzes the conversion of the retro-elements RNA genome into dsDNA within the VLP. The enzyme displays a DNA polymerase activity that can copy either DNA or RNA templates, and a ribonuclease H (RNase H) activity that cleaves the RNA strand of RNA-DNA heteroduplexes during plus-strand synthesis and hydrolyzes RNA primers. The conversion leads to a linear dsDNA copy of the retrotransposon that includes long terminal repeats (LTRs) at both ends. Integrase (IN) targets the VLP to the nucleus, where a subparticle preintegration complex (PIC) containing at least integrase and the newly synthesized dsDNA copy of the retrotransposon must transit the nuclear membrane. Once in the nucleus, integrase performs the integration of the dsDNA into the host genome. The polypeptide is Transposon Ty2-LR2 Gag-Pol polyprotein (TY2B-LR2) (Saccharomyces cerevisiae (strain ATCC 204508 / S288c) (Baker's yeast)).